Here is a 605-residue protein sequence, read N- to C-terminus: MKKKKNGMGAAADRGRLLALAHHDKLNPTKPSEAQRRFKPSILLLLGSSLPRLVPPLPSSFLPVVIKQTEFHQRWLVGDLNPPPPPCHLLPIQGQGQMQMQQRRKPPPAAAPVAAKQPSPRRTPGPLSFAGALLSLLVVATFLYINDHGNMMPPHASPDPDLRLLQEAAHQKVNSILLSRHAPAPPPRTNTNTSSSDQHLRLINIPMSSDLDLELGGNSTSSSGVEIQFEQQQQQEEKNLRGCELYKGRWVYDAAGREAPLYRESECGFLTEQVTCMRNGRRDDSYQRWRWQPEGCDLPSFDARALLERLRNKRMMFVGDSLNRNQWESMVCLVQSAIPYGQKTLTKFVNNGSLNVFRAHEYNATVEFYWAPFLVQSNSDDPQVHSVRDRVIAWRSIAKHAANWKGVHYLVFNTYIWWLNNFQIKVLKSRGAPFAGSGGWSSRYALVDRAIAYREVLKTWAKWVDRRIDPNKTHVFFMAMSPNHFMPEAWGGSAGAVKCAMETQPIVNRTSGGLDIGTDWRLHGVARGVLRSMRRVGVRFVDITALSELRKDAHTSVHTLRQGKLLTPEQQADPRTYADCIHWCLPGLPDTWNHFLYAHIVAHAA.

Over 1-124 (MKKKKNGMGA…AKQPSPRRTP (124 aa)) the chain is Cytoplasmic. The disordered stretch occupies residues 86 to 126 (PCHLLPIQGQGQMQMQQRRKPPPAAAPVAAKQPSPRRTPGP). A helical; Signal-anchor for type II membrane protein transmembrane segment spans residues 125 to 145 (GPLSFAGALLSLLVVATFLYI). Residues 146–605 (NDHGNMMPPH…LYAHIVAHAA (460 aa)) lie on the Lumenal side of the membrane. N-linked (GlcNAc...) asparagine glycans are attached at residues Asn192 and Asn218. Intrachain disulfides connect Cys243–Cys296, Cys267–Cys332, Cys276–Cys584, and Cys499–Cys580. A GDS motif motif is present at residues 319–321 (GDS). The Nucleophile role is filled by Ser321. N-linked (GlcNAc...) asparagine glycosylation is found at Asn351, Asn363, Asn471, and Asn508. Asp579 functions as the Proton donor in the catalytic mechanism. Positions 579–582 (DCIH) match the DXXH motif motif. His582 serves as the catalytic Proton acceptor.

This sequence belongs to the PC-esterase family. TBL subfamily. In terms of tissue distribution, expressed in roots, leaves and stems.

It is found in the golgi apparatus membrane. Its function is as follows. Xylan acetyltransferase required for 2-O- and 3-O-monoacetylation of xylosyl residues in xylan. Catalyzes the 2-O-acetylation of xylan, followed by nonenzymatic acetyl migration to the O-3 position, resulting in products that are monoacetylated at both O-2 and O-3 positions. This chain is Xylan O-acetyltransferase 7, found in Oryza sativa subsp. japonica (Rice).